A 248-amino-acid polypeptide reads, in one-letter code: tRNA (guanine-N(1)-)-methyltransferase (248 aa).

S-adenosyl-L-methionine is bound by residues glycine 113 and 133–138 (IGDYVL).

It belongs to the RNA methyltransferase TrmD family. Homodimer.

It localises to the cytoplasm. The catalysed reaction is guanosine(37) in tRNA + S-adenosyl-L-methionine = N(1)-methylguanosine(37) in tRNA + S-adenosyl-L-homocysteine + H(+). In terms of biological role, specifically methylates guanosine-37 in various tRNAs. The sequence is that of tRNA (guanine-N(1)-)-methyltransferase from Shewanella baltica (strain OS223).